An 850-amino-acid polypeptide reads, in one-letter code: DEAD-box ATP-dependent RNA helicase 26 (850 aa).

Disordered regions lie at residues 60 to 82 and 106 to 350; these read TRPERSQPEFARRSGAGGEIRAS and GKFT…ENDE. The segment covering 61-71 has biased composition (basic and acidic residues); it reads RPERSQPEFAR. Thr-109 is modified (phosphothreonine). Ser-110 carries the phosphoserine modification. 2 stretches are compositionally biased toward basic and acidic residues: residues 118 to 140 and 284 to 299; these read EVVRRNVDRDTSRGPRRGREGQS and GRNDRNVESGFRREPG. Composition is skewed to acidic residues over residues 315–325 and 336–350; these read LEEEDSSDDDE and LPSEDSSDEDDENDE. The Q motif motif lies at 382-410; sequence TRFDQFPLSPLSLKAIKDAGFETMTVVQE. Residues 413-596 form the Helicase ATP-binding domain; that stretch reads LPIILQGKDV…HVALKRDHEF (184 aa). 426-433 is a binding site for ATP; the sequence is AKTGTGKT. The short motif at 544-547 is the DEAD box element; that stretch reads DEAD. In terms of domain architecture, Helicase C-terminal spans 630 to 777; it reads LLKEHIADNV…IDPEAVKRVQ (148 aa).

Belongs to the DEAD box helicase family.

The catalysed reaction is ATP + H2O = ADP + phosphate + H(+). This Arabidopsis thaliana (Mouse-ear cress) protein is DEAD-box ATP-dependent RNA helicase 26 (RH26).